Consider the following 440-residue polypeptide: Virion host shutoff protein (440 aa).

Disordered stretches follow at residues 98–144 and 265–312; these read NIDH…RRKT and IDEP…AGPG. The span at 266 to 281 shows a compositional bias: low complexity; that stretch reads DEPPAASEESSASDQQ.

This sequence belongs to the herpesviridae VHS protein family.

The protein localises to the virion. Functionally, minor structural protein that acts as an endoribonuclease during lytic infection. Degrades host mRNAs in the cytoplasm by cutting them at preferred sites, including some in regions of translation initiation. The sequence is that of Virion host shutoff protein (UL41) from Amazona oratrix (yellow-headed parrot).